Reading from the N-terminus, the 117-residue chain is Protein Wnt-6 (117 aa).

The O-palmitoleoyl serine; by PORCN moiety is linked to residue Ser1. A disulfide bridge links Cys83 with Cys98. Asn84 carries an N-linked (GlcNAc...) asparagine glycan.

This sequence belongs to the Wnt family. Palmitoleoylation is required for efficient binding to frizzled receptors. Depalmitoleoylation leads to Wnt signaling pathway inhibition.

The protein localises to the secreted. Its subcellular location is the extracellular space. The protein resides in the extracellular matrix. Ligand for members of the frizzled family of seven transmembrane receptors. Probable developmental protein. May be a signaling molecule which affects the development of discrete regions of tissues. Is likely to signal over only few cell diameters. In Evasterias troschelii (Mottled sea star), this protein is Protein Wnt-6 (WNT-6).